The primary structure comprises 298 residues: 2-dehydropantoate 2-reductase (298 aa).

Residues 7–12 (GGGSVG), Asn-98, and Ala-124 each bind NADP(+). Substrate is bound at residue Asn-98. Lys-179 acts as the Proton donor in catalysis. Positions 183, 187, 197, and 246 each coordinate substrate. Glu-258 is an NADP(+) binding site.

Belongs to the ketopantoate reductase family.

The protein localises to the cytoplasm. The enzyme catalyses (R)-pantoate + NADP(+) = 2-dehydropantoate + NADPH + H(+). Its pathway is cofactor biosynthesis; (R)-pantothenate biosynthesis; (R)-pantoate from 3-methyl-2-oxobutanoate: step 2/2. Catalyzes the NADPH-dependent reduction of ketopantoate into pantoic acid. The chain is 2-dehydropantoate 2-reductase (panE) from Bacillus subtilis (strain 168).